The following is a 473-amino-acid chain: Photosystem II CP43 reaction center protein (473 aa).

Residues 1-14 constitute a propeptide that is removed on maturation; the sequence is MKTLYSLRRFYPVE. Threonine 15 is modified (N-acetylthreonine). Threonine 15 carries the post-translational modification Phosphothreonine. 5 consecutive transmembrane segments (helical) span residues 69–93, 134–155, 178–200, 255–275, and 291–312; these read LFEV…PHLA, LLGP…KDRN, KALY…RKIT, KPFA…LSYS, and WFNN…ASQA. Glutamate 367 lines the [CaMn4O5] cluster pocket. A helical transmembrane segment spans residues 447–471; the sequence is RARAAAAGFEKGIDRDFEPVLSMTP.

Belongs to the PsbB/PsbC family. PsbC subfamily. In terms of assembly, PSII is composed of 1 copy each of membrane proteins PsbA, PsbB, PsbC, PsbD, PsbE, PsbF, PsbH, PsbI, PsbJ, PsbK, PsbL, PsbM, PsbT, PsbX, PsbY, PsbZ, Psb30/Ycf12, at least 3 peripheral proteins of the oxygen-evolving complex and a large number of cofactors. It forms dimeric complexes. The cofactor is Binds multiple chlorophylls and provides some of the ligands for the Ca-4Mn-5O cluster of the oxygen-evolving complex. It may also provide a ligand for a Cl- that is required for oxygen evolution. PSII binds additional chlorophylls, carotenoids and specific lipids..

The protein resides in the plastid. It localises to the chloroplast thylakoid membrane. In terms of biological role, one of the components of the core complex of photosystem II (PSII). It binds chlorophyll and helps catalyze the primary light-induced photochemical processes of PSII. PSII is a light-driven water:plastoquinone oxidoreductase, using light energy to abstract electrons from H(2)O, generating O(2) and a proton gradient subsequently used for ATP formation. The protein is Photosystem II CP43 reaction center protein of Gossypium hirsutum (Upland cotton).